Consider the following 1120-residue polypeptide: ELKS/Rab6-interacting/CAST family member 1 (1120 aa).

The disordered stretch occupies residues 1–54 (MYGSARSVGKVEPSSQSPGRSPRLPRSPRLGHRRTNSTGGSSGNSVGGGSGKTL). Residue Lys-10 is modified to N6-acetyllysine. The segment covering 13–28 (PSSQSPGRSPRLPRSP) has biased composition (low complexity). 3 positions are modified to phosphoserine: Ser-17, Ser-21, and Ser-37. Thr-38 is subject to Phosphothreonine. A compositionally biased stretch (gly residues) spans 40 to 51 (GSSGNSVGGGSG). 6 positions are modified to phosphoserine: Ser-55, Ser-75, Ser-94, Ser-824, Leu-965, and Ser-1009. The stretch at 144-992 (RQARDNTIMD…RMKLMADNYE (849 aa)) forms a coiled coil. Residues 801–824 (KHKEQVEKKKSAQMLEEARRREDS) are compositionally biased toward basic and acidic residues. Residues 801 to 840 (KHKEQVEKKKSAQMLEEARRREDSLSDSSQQLQDSLRKKD) are disordered. Thr-1050 is subject to Phosphothreonine. The 63-residue stretch at 1050–1112 (TPPASYNADG…DHCPDILEQV (63 aa)) folds into the FIP-RBD domain. Residues 1060-1104 (EQAAWENELQQMTQEQLQNELEKVEGDNAELQEFANTILQQIADH) are a coiled coil.

Interacts with the GTB-bound forms of RAB6A isoform 1 and isoform 2 and with RAB6B. The interaction was strongest with RAB6B, followed by RAB6A isoform 2 and weakest with RAB6A isoform 1. Part of a complex with CHUK, IKBKB and IKBKG. Interacts with CHUK, IKBKB and IKBKG. The interaction with IKBKG is independent of CHUK and IKBKB. Interacts with NFKBIA. Isoform 2 interacts through its C-terminus with the PDZ domains of RIMS1 and RIMS2. Interacts with ERC2/CAST1. Interacts with SDCCAG8. Part of a cortical microtubule stabilization complex (CMSC) composed of KANK1, PPFIA1, PPFIBP1, ERC1/ELKS, PHLDB2/LL5beta, CLASPs, KIF21A and possibly additional interactors; within CMSCs KANK1 and PHLDB2/LL5beta appear to be the core components for targeting of microtubule-binding proteins KIF21A and CLASPs, whereas PPFIA1, PPFIBP1 and ERC1/ELKS serve as scaffolds for protein clustering. Widely expressed.

Its subcellular location is the cytoplasm. It is found in the cytoskeleton. The protein localises to the microtubule organizing center. It localises to the centrosome. The protein resides in the membrane. Its subcellular location is the golgi apparatus membrane. It is found in the presynaptic active zone. The protein localises to the cell projection. It localises to the podosome. Its function is as follows. Regulatory subunit of the IKK complex. Probably recruits IkappaBalpha/NFKBIA to the complex. May be involved in the organization of the cytomatrix at the nerve terminals active zone (CAZ) which regulates neurotransmitter release. May be involved in vesicle trafficking at the CAZ. May be involved in Rab-6 regulated endosomes to Golgi transport. The polypeptide is ELKS/Rab6-interacting/CAST family member 1 (Mus musculus (Mouse)).